A 342-amino-acid chain; its full sequence is NADH-quinone oxidoreductase subunit H 1 (342 aa).

Transmembrane regions (helical) follow at residues 7–27 (FLLE…VIAM), 78–98 (ALFI…GAVI), 120–140 (IGVL…MIGG), 166–186 (MGLS…GEIV), 193–213 (WWNI…SFAE), 245–265 (LFAE…FYFG), 284–304 (ILGT…FMWV), and 322–342 (KIMI…ILLF).

The protein belongs to the complex I subunit 1 family. In terms of assembly, NDH-1 is composed of 14 different subunits. Subunits NuoA, H, J, K, L, M, N constitute the membrane sector of the complex.

It localises to the cell inner membrane. The enzyme catalyses a quinone + NADH + 5 H(+)(in) = a quinol + NAD(+) + 4 H(+)(out). Its function is as follows. NDH-1 shuttles electrons from NADH, via FMN and iron-sulfur (Fe-S) centers, to quinones in the respiratory chain. The immediate electron acceptor for the enzyme in this species is believed to be ubiquinone. Couples the redox reaction to proton translocation (for every two electrons transferred, four hydrogen ions are translocated across the cytoplasmic membrane), and thus conserves the redox energy in a proton gradient. This subunit may bind ubiquinone. In Cytophaga hutchinsonii (strain ATCC 33406 / DSM 1761 / CIP 103989 / NBRC 15051 / NCIMB 9469 / D465), this protein is NADH-quinone oxidoreductase subunit H 1.